The following is a 212-amino-acid chain: MARCCKCPRLHLAVTVLACVLVFTEGVNLNDLLDRASQLSDKMHSLSTSLTNDLDSHFSSVGGKLMRPSMCHTSSLQIPNDKDQALSVPEGELLSLVRSLLMAWSDPLALLSSEATSLPHPERNSINTKTRELQDHTNSLGAGLERLGRKMGSSPESLSSLPFNSNDLGQDNISRLVNFHFLLSCFRRDSHKIDSFLKVLRCDAAKMLPEMC.

A signal peptide spans 1–26 (MARCCKCPRLHLAVTVLACVLVFTEG). Disulfide bonds link C71–C185 and C202–C212.

The protein belongs to the somatotropin/prolactin family. In terms of tissue distribution, pituitary gland.

The protein localises to the secreted. This is Prolactin (prl) from Ictalurus punctatus (Channel catfish).